A 249-amino-acid polypeptide reads, in one-letter code: Beta-crystallin B1 (249 aa).

The interval 1–49 (MSQPAVKASATAAVNPGPDGKGKGAPPPGPAPGSGPAQAPAQPMPAAKG) is disordered. Ser2 is modified (N-acetylserine). The segment at 2-55 (SQPAVKASATAAVNPGPDGKGKGAPPPGPAPGSGPAQAPAQPMPAAKGDLPPGS) is N-terminal arm. Low complexity predominate over residues 34–49 (SGPAQAPAQPMPAAKG). Beta/gamma crystallin 'Greek key' domains lie at 56–95 (YKLV…IVTS) and 96–140 (GPWV…RPIR). Residues 141 to 145 (MDAQE) form a connecting peptide region. Beta/gamma crystallin 'Greek key' domains follow at residues 146-187 (HKLC…RVSS) and 188-230 (GTWV…RRLR). The C-terminal arm stretch occupies residues 232–249 (RQWHREGCFPVLAAEPPK).

The protein belongs to the beta/gamma-crystallin family. In terms of assembly, homo/heterodimer, or complexes of higher-order. The structure of beta-crystallin oligomers seems to be stabilized through interactions between the N-terminal arms. In terms of processing, specific cleavages in the N-terminal arm occur during lens maturation and give rise to truncated forms, leading to impaired oligomerization and protein insolubilization.

Its function is as follows. Crystallins are the dominant structural components of the vertebrate eye lens. The sequence is that of Beta-crystallin B1 (CRYBB1) from Sus scrofa (Pig).